We begin with the raw amino-acid sequence, 235 residues long: Ribonuclease 3 (235 aa).

Residues Arg11–Gly137 form the RNase III domain. Glu51 is a binding site for Mg(2+). Residue Asp55 is part of the active site. Residues Asp123 and Glu126 each contribute to the Mg(2+) site. The active site involves Glu126. Positions Asp164–His233 constitute a DRBM domain.

Belongs to the ribonuclease III family. Homodimer. Requires Mg(2+) as cofactor.

The protein resides in the cytoplasm. The catalysed reaction is Endonucleolytic cleavage to 5'-phosphomonoester.. In terms of biological role, digests double-stranded RNA. Involved in the processing of primary rRNA transcript to yield the immediate precursors to the large and small rRNAs (23S and 16S). Processes some mRNAs, and tRNAs when they are encoded in the rRNA operon. Processes pre-crRNA and tracrRNA of type II CRISPR loci if present in the organism. The polypeptide is Ribonuclease 3 (Symbiobacterium thermophilum (strain DSM 24528 / JCM 14929 / IAM 14863 / T)).